Consider the following 182-residue polypeptide: ATP-dependent protease subunit HslV (182 aa).

Threonine 10 is a catalytic residue. The Na(+) site is built by alanine 166, cysteine 169, and serine 172.

This sequence belongs to the peptidase T1B family. HslV subfamily. As to quaternary structure, a double ring-shaped homohexamer of HslV is capped on each side by a ring-shaped HslU homohexamer. The assembly of the HslU/HslV complex is dependent on binding of ATP.

The protein localises to the cytoplasm. It catalyses the reaction ATP-dependent cleavage of peptide bonds with broad specificity.. With respect to regulation, allosterically activated by HslU binding. Functionally, protease subunit of a proteasome-like degradation complex believed to be a general protein degrading machinery. The protein is ATP-dependent protease subunit HslV of Rickettsia prowazekii (strain Madrid E).